Here is a 530-residue protein sequence, read N- to C-terminus: Putative sulfate transporter YvdB (530 aa).

The next 10 helical transmembrane spans lie at 19–39, 41–61, 68–88, 91–111, 121–141, 164–184, 192–212, 241–261, 313–333, and 384–404; these read LIAG…FAIA, GVEP…ISLF, IGGP…QYGL, LLIA…FKLG, VIVG…IANF, LGTF…ILLV, VPGA…FFPD, MVML…ESIL, AVSP…LLVF, and VLFD…VFFI. In terms of domain architecture, STAS spans 420–530; it reads PVLAKREDPS…FFDHHDEITG (111 aa).

This sequence belongs to the SLC26A/SulP transporter (TC 2.A.53) family.

It is found in the cell membrane. This chain is Putative sulfate transporter YvdB (yvdB), found in Bacillus subtilis (strain 168).